Reading from the N-terminus, the 465-residue chain is Cysteine--tRNA ligase (465 aa).

Cysteine 29 contacts Zn(2+). The 'HIGH' region motif lies at 31–41 (PTVYNYIHIGN). Zn(2+) is bound by residues cysteine 209, histidine 234, and glutamate 238. Residues 266-270 (KMSKS) carry the 'KMSKS' region motif. Lysine 269 is a binding site for ATP. Residue serine 270 is modified to Phosphoserine.

Belongs to the class-I aminoacyl-tRNA synthetase family. As to quaternary structure, monomer. Zn(2+) serves as cofactor.

It is found in the cytoplasm. It carries out the reaction tRNA(Cys) + L-cysteine + ATP = L-cysteinyl-tRNA(Cys) + AMP + diphosphate. The chain is Cysteine--tRNA ligase from Bacillus cereus (strain 03BB102).